The chain runs to 53 residues: Tryptophan RNA-binding attenuator protein inhibitory protein (53 aa).

2 CXXCXGXG motif repeats span residues 12–19 (CPKCERAG) and 26–33 (CPACSGKG).

As to quaternary structure, homopentamer or homohexamer.

It is found in the cytoplasm. Its function is as follows. By forming a complex with tryptophan-activated TRAP, and masking its RNA binding site, it inhibits TRAP's RNA binding ability, thereby abolishing TRAP regulation of gene expression, leading to antitermination and increased trp operon expression. AT acts by competing with messenger RNA for the RNA binding domain of TRAP. The polypeptide is Tryptophan RNA-binding attenuator protein inhibitory protein (rtpA) (Bacillus subtilis (strain 168)).